A 253-amino-acid polypeptide reads, in one-letter code: Tetraspanin-11 (253 aa).

4 helical membrane passes run 19–39 (LLFIFNFFFWVGGAAVMAVGV), 63–83 (ILIFAGALVMVTGFLGFGAVI), 90–110 (LSAYFCLLLAIFLVELVAGVL), and 220–240 (LLLMGAVGIGVACLQICGMIL).

This sequence belongs to the tetraspanin (TM4SF) family.

Its subcellular location is the membrane. This chain is Tetraspanin-11 (TSPAN11), found in Bos taurus (Bovine).